The chain runs to 128 residues: DNA-directed RNA polymerase subunit omega (128 aa).

The disordered stretch occupies residues 87-106 (ARSSQAAPKSAPGQEIGKSF).

The protein belongs to the RNA polymerase subunit omega family. As to quaternary structure, the RNAP catalytic core consists of 2 alpha, 1 beta, 1 beta' and 1 omega subunit. When a sigma factor is associated with the core the holoenzyme is formed, which can initiate transcription.

The enzyme catalyses RNA(n) + a ribonucleoside 5'-triphosphate = RNA(n+1) + diphosphate. Functionally, promotes RNA polymerase assembly. Latches the N- and C-terminal regions of the beta' subunit thereby facilitating its interaction with the beta and alpha subunits. The polypeptide is DNA-directed RNA polymerase subunit omega (Anaplasma marginale (strain Florida)).